Reading from the N-terminus, the 156-residue chain is Probable succinate transporter subunit YjjB (156 aa).

4 consecutive transmembrane segments (helical) span residues 7-27 (WALL…AMVF), 54-74 (FGMN…IIGI), 86-106 (VFTV…TAMI), and 128-148 (FLKA…PGIW).

It belongs to the ThrE exporter (TC 2.A.79) family. In terms of assembly, the transporter is composed of YjjB and YjjP.

The protein localises to the cell inner membrane. Its function is as follows. Involved in succinate export with YjjP. Both proteins are required for export. The chain is Probable succinate transporter subunit YjjB from Pectobacterium carotovorum subsp. carotovorum (strain PC1).